Here is a 268-residue protein sequence, read N- to C-terminus: Shikimate dehydrogenase (NADP(+)) (268 aa).

Shikimate-binding positions include 13-15 (SLS) and T60. The Proton acceptor role is filled by K64. An NADP(+)-binding site is contributed by E76. Shikimate contacts are provided by N85 and D100. NADP(+)-binding positions include 124–128 (GAGGA), 148–153 (NRTMAR), and I209. Residue Y211 coordinates shikimate. G232 contributes to the NADP(+) binding site.

Belongs to the shikimate dehydrogenase family. Homodimer.

It catalyses the reaction shikimate + NADP(+) = 3-dehydroshikimate + NADPH + H(+). The protein operates within metabolic intermediate biosynthesis; chorismate biosynthesis; chorismate from D-erythrose 4-phosphate and phosphoenolpyruvate: step 4/7. Involved in the biosynthesis of the chorismate, which leads to the biosynthesis of aromatic amino acids. Catalyzes the reversible NADPH linked reduction of 3-dehydroshikimate (DHSA) to yield shikimate (SA). The polypeptide is Shikimate dehydrogenase (NADP(+)) (Staphylococcus aureus (strain JH1)).